A 37-amino-acid polypeptide reads, in one-letter code: Large ribosomal subunit protein bL36 (37 aa).

This sequence belongs to the bacterial ribosomal protein bL36 family.

This chain is Large ribosomal subunit protein bL36, found in Francisella tularensis subsp. mediasiatica (strain FSC147).